A 279-amino-acid polypeptide reads, in one-letter code: Presqualene diphosphate synthase (279 aa).

It belongs to the phytoene/squalene synthase family. HpnD subfamily.

The enzyme catalyses 2 (2E,6E)-farnesyl diphosphate = presqualene diphosphate + diphosphate. It participates in secondary metabolite biosynthesis; hopanoid biosynthesis. Functionally, involved in the biosynthesis of the hopanoid precursor squalene (SQ) from farnesyl diphosphate (FPP). Catalyzes the first step, the formation of presqualene diphosphate (PSPP) from two molecules of FPP. This chain is Presqualene diphosphate synthase, found in Sinorhizobium fredii (strain NBRC 101917 / NGR234).